Consider the following 131-residue polypeptide: Small ribosomal subunit protein eS8 (131 aa).

Positions 1 to 37 (MKLGAFYKGGDLKKPSGGKKRRVRRTKKKALGGGPPQ) are disordered. The span at 16-30 (SGGKKRRVRRTKKKA) shows a compositional bias: basic residues.

Belongs to the eukaryotic ribosomal protein eS8 family. In terms of assembly, part of the 30S ribosomal subunit.

This chain is Small ribosomal subunit protein eS8, found in Pyrobaculum neutrophilum (strain DSM 2338 / JCM 9278 / NBRC 100436 / V24Sta) (Thermoproteus neutrophilus).